A 252-amino-acid polypeptide reads, in one-letter code: Chitooligosaccharide deacetylase (252 aa).

Histidine 61 and histidine 125 together coordinate Mg(2+).

This sequence belongs to the YdjC deacetylase family. ChbG subfamily. In terms of assembly, homodimer. The cofactor is Mg(2+).

The protein localises to the cytoplasm. The catalysed reaction is N,N'-diacetylchitobiose + H2O = N-acetyl-beta-D-glucosaminyl-(1-&gt;4)-D-glucosamine + acetate. It carries out the reaction diacetylchitobiose-6'-phosphate + H2O = N'-monoacetylchitobiose-6'-phosphate + acetate. The protein operates within glycan degradation; chitin degradation. Its function is as follows. Involved in the degradation of chitin. ChbG is essential for growth on the acetylated chitooligosaccharides chitobiose and chitotriose but is dispensable for growth on cellobiose and chitosan dimer, the deacetylated form of chitobiose. Deacetylation of chitobiose-6-P and chitotriose-6-P is necessary for both the activation of the chb promoter by the regulatory protein ChbR and the hydrolysis of phosphorylated beta-glucosides by the phospho-beta-glucosidase ChbF. Catalyzes the removal of only one acetyl group from chitobiose-6-P to yield monoacetylchitobiose-6-P, the inducer of ChbR and the substrate of ChbF. The protein is Chitooligosaccharide deacetylase of Salmonella enteritidis PT4 (strain P125109).